The primary structure comprises 55 residues: Locustin (55 aa).

Cystine bridges form between cysteine 5–cysteine 40, cysteine 7–cysteine 36, cysteine 10–cysteine 32, and cysteine 17–cysteine 54.

Monomer. In terms of tissue distribution, stored in hemocyte granules and secreted into the hemolymph.

The protein localises to the secreted. Has antibacterial activity against Gram-positive bacterium M.luteus. In Locusta migratoria (Migratory locust), this protein is Locustin.